Reading from the N-terminus, the 258-residue chain is Indole-3-glycerol phosphate synthase 2 (258 aa).

This sequence belongs to the TrpC family.

The enzyme catalyses 1-(2-carboxyphenylamino)-1-deoxy-D-ribulose 5-phosphate + H(+) = (1S,2R)-1-C-(indol-3-yl)glycerol 3-phosphate + CO2 + H2O. Its pathway is amino-acid biosynthesis; L-tryptophan biosynthesis; L-tryptophan from chorismate: step 4/5. Functionally, the function of the second trp operon in S.coelicolor is to produce tryptophan for the biosynthesis of calcium-dependent antibiotic (CDA). This chain is Indole-3-glycerol phosphate synthase 2 (trpC2), found in Streptomyces coelicolor (strain ATCC BAA-471 / A3(2) / M145).